The following is a 357-amino-acid chain: DNA integrity scanning protein DisA (357 aa).

The 139-residue stretch at 8–146 (VKSMINILQL…GNLRYTLKDI (139 aa)) folds into the DAC domain. Residues glycine 75, leucine 93, and 106 to 110 (MRHRT) contribute to the ATP site.

It belongs to the DisA family. Homooctamer. It depends on Mg(2+) as a cofactor.

It carries out the reaction 2 ATP = 3',3'-c-di-AMP + 2 diphosphate. Its function is as follows. Participates in a DNA-damage check-point that is active prior to asymmetric division when DNA is damaged. DisA forms globular foci that rapidly scan along the chromosomes during sporulation, searching for lesions. When a lesion is present, DisA pauses at the lesion site. This triggers a cellular response that culminates in a temporary block in sporulation initiation. Also has diadenylate cyclase activity, catalyzing the condensation of 2 ATP molecules into cyclic di-AMP (c-di-AMP). c-di-AMP acts as a signaling molecule that couples DNA integrity with progression of sporulation. The rise in c-di-AMP level generated by DisA while scanning the chromosome, operates as a positive signal that advances sporulation; upon encountering a lesion, the DisA focus arrests at the damaged site and halts c-di-AMP synthesis. The sequence is that of DNA integrity scanning protein DisA from Bacillus cereus (strain ATCC 14579 / DSM 31 / CCUG 7414 / JCM 2152 / NBRC 15305 / NCIMB 9373 / NCTC 2599 / NRRL B-3711).